The following is a 751-amino-acid chain: Diamine oxidase [copper-containing] (751 aa).

Residues 1 to 19 (MPALGWAVAAILMLQTAMA) form the signal peptide. N-linked (GlcNAc...) asparagine glycans are attached at residues Asn-110 and Asn-168. Residues Cys-177 and Cys-181 are joined by a disulfide bond. Asp-373 serves as the catalytic Proton acceptor. A disulfide bond links Cys-391 and Cys-417. The active-site Schiff-base intermediate with substrate; via topaquinone is Tyr-461. Tyr-461 is modified (2',4',5'-topaquinone). Residues His-510 and His-512 each coordinate Cu(2+). Ca(2+)-binding residues include Asp-519, Leu-520, and Asp-521. N-linked (GlcNAc...) asparagine glycosylation occurs at Asn-538. Positions 562, 653, 656, 658, 664, and 665 each coordinate Ca(2+). His-675 is a binding site for Cu(2+). N-linked (GlcNAc...) asparagine glycosylation is present at Asn-745.

It belongs to the copper/topaquinone oxidase family. In terms of assembly, homodimer; disulfide-linked. Requires Cu(2+) as cofactor. The cofactor is Ca(2+). L-topaquinone serves as cofactor. Post-translationally, N-glycosylated. In terms of processing, topaquinone (TPQ) is generated by copper-dependent autoxidation of a specific tyrosyl residue. In terms of tissue distribution, widely expressed with higher expression in placenta and kidney.

Its subcellular location is the secreted. The protein localises to the extracellular space. The protein resides in the cell membrane. The catalysed reaction is histamine + O2 + H2O = imidazole-4-acetaldehyde + H2O2 + NH4(+). It carries out the reaction N(tau)-methylhistamine + O2 + H2O = 1-methylimidazole-4-acetaldehyde + H2O2 + NH4(+). It catalyses the reaction putrescine + O2 + H2O = 4-aminobutanal + H2O2 + NH4(+). The enzyme catalyses cadaverine + O2 + H2O = 5-aminopentanal + H2O2 + NH4(+). Its activity is regulated as follows. Inhibited by amiloride and amiloride analogs. Inhibited by isoniazid, cimetidine, clonidine, berenil and pentamidine. Functionally, catalyzes the oxidative deamination of primary amines to the corresponding aldehydes with the concomitant production of hydrogen peroxide and ammonia. Its preferred substrates are the diamines histamine and 1-methylhistamine and it could therefore play a role in allergic and immune responses. Has a broad specificity for diamines and can also act on cadaverine and putrescine, two products of amino acid catabolism. It could also act on polyamines, like spermidine and spermine though less efficiently, and regulate various biological processes. The polypeptide is Diamine oxidase [copper-containing] (Homo sapiens (Human)).